We begin with the raw amino-acid sequence, 395 residues long: Putative nickel insertion protein (395 aa).

It belongs to the LarC family.

In Methanopyrus kandleri (strain AV19 / DSM 6324 / JCM 9639 / NBRC 100938), this protein is Putative nickel insertion protein.